Consider the following 212-residue polypeptide: Transcriptional regulator GfcR (212 aa).

Positions 38–60 are disordered; the sequence is LVERSGTGTEPDTSDDGGPHDIH.

It belongs to the purine/pyrimidine phosphoribosyltransferase family. GfcR subfamily.

Its function is as follows. DNA-binding transcriptional regulator that functions as a regulator of central sugar catabolic pathways. The protein is Transcriptional regulator GfcR of Haloarcula marismortui (strain ATCC 43049 / DSM 3752 / JCM 8966 / VKM B-1809) (Halobacterium marismortui).